We begin with the raw amino-acid sequence, 639 residues long: tRNA uridine 5-carboxymethylaminomethyl modification enzyme MnmG (639 aa).

Residue 15 to 20 coordinates FAD; the sequence is GAGHAG. 276–290 is an NAD(+) binding site; that stretch reads GPRYCPSIEDKIVRF.

This sequence belongs to the MnmG family. Homodimer. Heterotetramer of two MnmE and two MnmG subunits. Requires FAD as cofactor.

The protein resides in the cytoplasm. NAD-binding protein involved in the addition of a carboxymethylaminomethyl (cmnm) group at the wobble position (U34) of certain tRNAs, forming tRNA-cmnm(5)s(2)U34. The chain is tRNA uridine 5-carboxymethylaminomethyl modification enzyme MnmG from Streptococcus gordonii (strain Challis / ATCC 35105 / BCRC 15272 / CH1 / DL1 / V288).